The chain runs to 125 residues: Short coiled-coil protein (125 aa).

Residues 1 to 31 are disordered; that stretch reads MSKMDGLSTGEEEDSTFTSISLEDDTDHSLK. Residues 43–101 are a coiled coil; sequence KMMNADMDAVDAENQVELEEKTRLINQVLELQHTLEDLSARVDAVKEENLKLKSENQVL.

The protein belongs to the SCOC family. In terms of assembly, homodimer. Interacts with ARL1, ARL2 and ARL3. Directly interacts with FEZ1 and UVRAG. The interaction with UVRAG is reduced by amino acid starvation, but the complex is stabilized in the presence of FEZ1. Interacts with NRBF2.

The protein resides in the golgi apparatus membrane. The protein localises to the golgi apparatus. It is found in the trans-Golgi network. It localises to the cytoplasm. Its subcellular location is the cytosol. Functionally, positive regulator of amino acid starvation-induced autophagy. This is Short coiled-coil protein (Scoc) from Mus musculus (Mouse).